Consider the following 479-residue polypeptide: Ammonium transporter 3 member 2 (479 aa).

Helical transmembrane passes span 34–54, 59–79, 139–159, 164–184, 202–222, 237–257, 272–292, 297–317, 321–341, 355–375, and 407–427; these read VAAT…YGGV, WAVN…ICWV, VVYF…GSLL, FLAW…VGAF, GGYV…YWVG, ILFT…FNGG, NTNI…VIFF, VVGA…AAGV, WAAL…MMIL, LGVF…TGLF, and IAGG…ICLA.

It belongs to the ammonia transporter channel (TC 1.A.11.2) family.

The protein localises to the membrane. Involved in ammonium transport. This chain is Ammonium transporter 3 member 2 (AMT3-2), found in Oryza sativa subsp. japonica (Rice).